A 595-amino-acid polypeptide reads, in one-letter code: Aspartate--tRNA ligase (595 aa).

Glu-173 is an L-aspartate binding site. Residues 197 to 200 (QLFK) are aspartate. Arg-219 contributes to the L-aspartate binding site. Residues 219 to 221 (RDE) and Gln-228 contribute to the ATP site. His-449 provides a ligand contact to L-aspartate. Glu-483 is an ATP binding site. An L-aspartate-binding site is contributed by Arg-490. 535–538 (GLDR) is a binding site for ATP.

Belongs to the class-II aminoacyl-tRNA synthetase family. Type 1 subfamily. Homodimer.

The protein resides in the cytoplasm. The enzyme catalyses tRNA(Asp) + L-aspartate + ATP = L-aspartyl-tRNA(Asp) + AMP + diphosphate. Catalyzes the attachment of L-aspartate to tRNA(Asp) in a two-step reaction: L-aspartate is first activated by ATP to form Asp-AMP and then transferred to the acceptor end of tRNA(Asp). This is Aspartate--tRNA ligase from Shewanella woodyi (strain ATCC 51908 / MS32).